Reading from the N-terminus, the 448-residue chain is Adenylosuccinate synthetase (448 aa).

Residues 22 to 28 (GDEGKGK) and 50 to 52 (GHT) each bind GTP. The Proton acceptor role is filled by Asp-23. 2 residues coordinate Mg(2+): Asp-23 and Gly-50. Residues 23-26 (DEGK), 48-51 (NAGH), Thr-139, Arg-153, Gln-234, Thr-249, and Arg-321 each bind IMP. His-51 acts as the Proton donor in catalysis. 317–323 (SVTGRPR) is a substrate binding site. Residues Arg-323, 349–351 (KLD), and 431–433 (STG) contribute to the GTP site.

The protein belongs to the adenylosuccinate synthetase family. Homodimer. Mg(2+) is required as a cofactor.

It localises to the cytoplasm. The enzyme catalyses IMP + L-aspartate + GTP = N(6)-(1,2-dicarboxyethyl)-AMP + GDP + phosphate + 2 H(+). Its pathway is purine metabolism; AMP biosynthesis via de novo pathway; AMP from IMP: step 1/2. Its function is as follows. Plays an important role in the de novo pathway of purine nucleotide biosynthesis. Catalyzes the first committed step in the biosynthesis of AMP from IMP. The sequence is that of Adenylosuccinate synthetase from Burkholderia thailandensis (strain ATCC 700388 / DSM 13276 / CCUG 48851 / CIP 106301 / E264).